A 917-amino-acid polypeptide reads, in one-letter code: Interleukin-6 receptor subunit beta (917 aa).

An N-terminal signal peptide occupies residues 1 to 22 (MSAPRIWLAQALLFFLTTESIG). Residues 23–617 (QLLEPCGYIY…TPKFAQGEIE (595 aa)) lie on the Extracellular side of the membrane. The 95-residue stretch at 26–120 (EPCGYIYPEF…IEQNVYGVTM (95 aa)) folds into the Ig-like C2-type domain. 2 cysteine pairs are disulfide-bonded: cysteine 28/cysteine 54 and cysteine 48/cysteine 103. Asparagine 43, asparagine 61, asparagine 83, and asparagine 131 each carry an N-linked (GlcNAc...) asparagine glycan. 5 consecutive Fibronectin type-III domains span residues 128 to 221 (KPTN…VKPT), 222 to 322 (PPYN…TYED), 327 to 417 (PPSF…IPSP), 422 to 515 (AYSV…LKQA), and 517 to 611 (PARG…TPKF). Cysteine 134 and cysteine 144 form a disulfide bridge. Asparagine 157 carries N-linked (GlcNAc...) asparagine glycosylation. An intrachain disulfide couples cysteine 172 to cysteine 180. A glycan (N-linked (GlcNAc...) asparagine) is linked at asparagine 225. Residues 308 to 312 (WSDWS) carry the WSXWS motif motif. The N-linked (GlcNAc...) asparagine glycan is linked to asparagine 388. Cysteines 456 and 464 form a disulfide. Asparagine 476 and asparagine 551 each carry an N-linked (GlcNAc...) asparagine glycan. Residues 618–639 (AIVVPVCLAFLLTTLLGVLFCF) traverse the membrane as a helical segment. Topologically, residues 640–917 (NKRDLIKKHI…TVRQGGYMPQ (278 aa)) are cytoplasmic. The Box 1 motif motif lies at 649 to 657 (IWPNVPDPS). 2 disordered regions span residues 658–678 (KSHI…NSKD) and 719–754 (TEGH…TAST). Residues serine 659 and serine 665 each carry the phosphoserine modification. Over residues 729–753 (SSCMSSSRPSISSNEENESAQSTAS) the composition is skewed to low complexity. Phosphoserine is present on residues serine 780, serine 787, serine 827, and serine 837. The interval 898-917 (EEIPKSYLPQTVRQGGYMPQ) is disordered.

It belongs to the type I cytokine receptor family. Type 2 subfamily. Component of a hexamer of two molecules each of IL6, IL6R and IL6ST; associates with the complex IL6:IL6R but does not interact with IL6. Forms heterodimers composed of LIFR and IL6ST (type I OSM receptor) which are activated by LIF and OSM. Also forms heterodimers composed of OSMR and IL6ST (type II receptor) which are activated by OSM but not by LIF. Interacts with HCK. Interacts with INPP5D/SHIP1. Interacts with SRC and YES. Interacts with ARMH4; this interaction prevents IL6ST protein homodimerization and bridges ARMH4 with IL6R and STAT3 and therefore inhibits phosphorylation of STAT3 at 'Tyr-705'. Post-translationally, phosphorylation of Ser-780 down-regulates cell surface expression. Heavily N-glycosylated. Glycosylation is required for protein stability and localization in plasma membrane but not for ligand binding. Expression not restricted to IL6-responsive cells. Found in tissues such as brain, heart, thymus, spleen, kidney, lung and liver. Found in all the cell lines tested except BaF-B03. Expressed paraventricular nucleus of the hypothalamus.

The protein resides in the cell membrane. Its function is as follows. Signal-transducing molecule. The receptor systems for IL6, LIF, OSM, CNTF, IL11, CTF1 and BSF3 can utilize IL6ST for initiating signal transmission. Binding of IL6 to IL6R induces IL6ST homodimerization and formation of a high-affinity receptor complex, which activates the intracellular JAK-MAPK and JAK-STAT3 signaling pathways. That causes phosphorylation of IL6ST tyrosine residues which in turn activates STAT3. In parallel, the IL6 signaling pathway induces the expression of two cytokine receptor signaling inhibitors, SOCS1 and SOCS3, which inhibit JAK and terminate the activity of the IL6 signaling pathway as a negative feedback loop. Also activates the yes-associated protein 1 (YAP) and NOTCH pathways to control inflammation-induced epithelial regeneration, independently of STAT3. Mediates signals which regulate immune response, hematopoiesis, pain control and bone metabolism. Has a role in embryonic development. Essential for survival of motor and sensory neurons and for differentiation of astrocytes. Required for expression of TRPA1 in nociceptive neurons. Required for the maintenance of PTH1R expression in the osteoblast lineage and for the stimulation of PTH-induced osteoblast differentiation. Required for normal trabecular bone mass and cortical bone composition. The protein is Interleukin-6 receptor subunit beta of Mus musculus (Mouse).